We begin with the raw amino-acid sequence, 70 residues long: DNA-directed RNA polymerase subunit epsilon (70 aa).

This sequence belongs to the RNA polymerase subunit epsilon family. As to quaternary structure, RNAP is composed of a core of 2 alpha, a beta and a beta' subunit. The core is associated with a delta subunit, and at least one of epsilon or omega. When a sigma factor is associated with the core the holoenzyme is formed, which can initiate transcription.

The enzyme catalyses RNA(n) + a ribonucleoside 5'-triphosphate = RNA(n+1) + diphosphate. A non-essential component of RNA polymerase (RNAP). This Leuconostoc mesenteroides subsp. mesenteroides (strain ATCC 8293 / DSM 20343 / BCRC 11652 / CCM 1803 / JCM 6124 / NCDO 523 / NBRC 100496 / NCIMB 8023 / NCTC 12954 / NRRL B-1118 / 37Y) protein is DNA-directed RNA polymerase subunit epsilon.